The following is a 61-amino-acid chain: Insect toxin BsIT3 (61 aa).

An LCN-type CS-alpha/beta domain is found at aspartate 1–asparagine 61. Intrachain disulfides connect cysteine 10/cysteine 60, cysteine 14/cysteine 35, cysteine 21/cysteine 42, and cysteine 25/cysteine 44.

Belongs to the long (4 C-C) scorpion toxin superfamily. Sodium channel inhibitor family. Beta subfamily. In terms of tissue distribution, expressed by the venom gland.

The protein localises to the secreted. Its function is as follows. Depressant insect beta-toxins cause a transient contraction paralysis followed by a slow flaccid paralysis. They bind voltage-independently at site-4 of sodium channels (Nav) and shift the voltage of activation toward more negative potentials thereby affecting sodium channel activation and promoting spontaneous and repetitive firing. This toxin is active only on insects. The sequence is that of Insect toxin BsIT3 from Hottentotta tamulus sindicus (Scorpion).